The sequence spans 346 residues: Phenylalanine--tRNA ligase alpha subunit (346 aa).

E262 is a binding site for Mg(2+).

The protein belongs to the class-II aminoacyl-tRNA synthetase family. Phe-tRNA synthetase alpha subunit type 1 subfamily. As to quaternary structure, tetramer of two alpha and two beta subunits. Requires Mg(2+) as cofactor.

The protein localises to the cytoplasm. It carries out the reaction tRNA(Phe) + L-phenylalanine + ATP = L-phenylalanyl-tRNA(Phe) + AMP + diphosphate + H(+). The polypeptide is Phenylalanine--tRNA ligase alpha subunit (Ehrlichia chaffeensis (strain ATCC CRL-10679 / Arkansas)).